Here is a 118-residue protein sequence, read N- to C-terminus: MKNRYIASFEAAQIAEKQIPQFRSGDTVRIGVEIKEGEKKRIQTFEGIIIGRSGNGVDATFTIRKLGANSIGVERIFPLYSESLKSFEVIRRGRVRRAKLNFLRGLKGKAARIKELKR.

The protein belongs to the bacterial ribosomal protein bL19 family.

This protein is located at the 30S-50S ribosomal subunit interface and may play a role in the structure and function of the aminoacyl-tRNA binding site. The sequence is that of Large ribosomal subunit protein bL19 from Aliarcobacter butzleri (strain RM4018) (Arcobacter butzleri).